We begin with the raw amino-acid sequence, 809 residues long: Zinc finger CCCH domain-containing protein 24 (809 aa).

Methionine 1 carries the N-acetylmethionine modification. The segment at 1 to 74 (METSSIEINE…NLESSDTKIT (74 aa)) is disordered. Residues 30 to 46 (ETSSIDELPSSDSNATD) show a composition bias toward polar residues. A compositionally biased stretch (basic and acidic residues) spans 51–65 (VGEKRKRADEDEKTN). Residues 79 to 107 (WWKTSLCSYFRREASCSHGNECKYAHGEA) form a C3H1-type zinc finger. Positions 536 and 586 each coordinate S-adenosyl-L-methionine. The disordered stretch occupies residues 652–693 (EEMTNSEHVADQNLPPSNTQVEELQDNEQKDSSSLEPEKTTK). The segment covering 678–692 (NEQKDSSSLEPEKTT) has biased composition (basic and acidic residues). Aspartate 704 provides a ligand contact to S-adenosyl-L-methionine. Catalysis depends on cysteine 732, which acts as the Nucleophile.

This sequence belongs to the class I-like SAM-binding methyltransferase superfamily. RNA M5U methyltransferase family.

In Arabidopsis thaliana (Mouse-ear cress), this protein is Zinc finger CCCH domain-containing protein 24.